A 69-amino-acid chain; its full sequence is Putative membrane protein insertion efficiency factor (69 aa).

It belongs to the UPF0161 family.

The protein resides in the cell inner membrane. Could be involved in insertion of integral membrane proteins into the membrane. In Dechloromonas aromatica (strain RCB), this protein is Putative membrane protein insertion efficiency factor.